The sequence spans 558 residues: MAAVEANGTFQANTKTTEPVRPLANFPPSVWGDRFLSFSLDTTELEGYAKAMEEPKEEVRKLIVDPTMDSNKKLSLIYSVHRLGLTYLFLQEIEAQLDKLFKEFNLQDYDEFDLYTTSINFQVFRHLGHKLPCDVFNKFKDSSSGTFKESITNDVKGMLGLYESAQLRLRGEPILDEASAFTETQLKSVVNTLEGNLAKQVMQSLRRPFHQGMPMVEARMYFSNYDEECSTHESLPKLAKLHFNYLQLQQKEELRIVSKWWKDMRFQETTPYIRDRVPEIYLWILGLYFEPRYSLARIIATKITLFLVVLDDTYDAYATIEEIRLLTDAINRWDISAMEQIPEYIRPFYKILLDEYAELEKQLAKEGRAKSVIASKEAFQDIARGYLEEAEWTNSGYVASFPEYMKNGLITSAYNVISKSALVGMGEMVGEDALAWYESHPKTLQASELISRLQDDVMTYQFERERGQSATGVDSYIKTYGVTEKEAIDELNKMIENAWKDINEGCLKPREVSMDLLAPILNLARMIDVVYRYDDGFTFPGKTMKEYITLLFVGSSPM.

Residues Asp-311, Asp-315, Asp-455, Thr-459, and Glu-463 each coordinate Mg(2+). The DDXXD motif signature appears at 311 to 315 (DDTYD).

Belongs to the terpene synthase family. Mg(2+) serves as cofactor. In terms of tissue distribution, expressed in roots and in green and etiolated seedlings.

It catalyses the reaction (2E,6E)-farnesyl diphosphate = (+)-(R)-germacrene A + diphosphate. It participates in secondary metabolite biosynthesis; terpenoid biosynthesis. In terms of biological role, involved in sesquiterpene lactone biosynthesis. Produces exclusively (+)-germacrene A. The protein is Germacrene A synthase short form of Cichorium intybus (Chicory).